The sequence spans 393 residues: NAD(P)H-quinone oxidoreductase subunit H, chloroplastic (393 aa).

Belongs to the complex I 49 kDa subunit family. As to quaternary structure, NDH is composed of at least 16 different subunits, 5 of which are encoded in the nucleus.

Its subcellular location is the plastid. The protein localises to the chloroplast thylakoid membrane. It catalyses the reaction a plastoquinone + NADH + (n+1) H(+)(in) = a plastoquinol + NAD(+) + n H(+)(out). The catalysed reaction is a plastoquinone + NADPH + (n+1) H(+)(in) = a plastoquinol + NADP(+) + n H(+)(out). Its function is as follows. NDH shuttles electrons from NAD(P)H:plastoquinone, via FMN and iron-sulfur (Fe-S) centers, to quinones in the photosynthetic chain and possibly in a chloroplast respiratory chain. The immediate electron acceptor for the enzyme in this species is believed to be plastoquinone. Couples the redox reaction to proton translocation, and thus conserves the redox energy in a proton gradient. This chain is NAD(P)H-quinone oxidoreductase subunit H, chloroplastic, found in Phaseolus vulgaris (Kidney bean).